Here is a 256-residue protein sequence, read N- to C-terminus: Protein CUSTOS (256 aa).

The span at 1–19 (MVAPSGAMSDSENSSSSSS) shows a compositional bias: low complexity. Disordered stretches follow at residues 1–83 (MVAP…TPEF), 127–163 (FTSIPGGHKKEASPRPCRKRQPPSSSEDSDEELQRCR), and 227–256 (IQKKRKKKAKKSREAPLCPPAECAAAKPEN). Position 62 is a phosphoserine (Ser62). Residues 63 to 83 (RRHEVNQHEEDGNDLRTTPEF) show a composition bias toward basic and acidic residues. Position 80 is a phosphothreonine (Thr80). The residue at position 139 (Ser139) is a Phosphoserine. A Nucleolar localization signal (NLS) motif is present at residues 228 to 235 (QKKRKKKA). Positions 228–237 (QKKRKKKAKK) are enriched in basic residues. Positions 246-256 (PAECAAAKPEN) are enriched in low complexity.

This sequence belongs to the CUSTOS family.

The protein resides in the nucleus envelope. In terms of biological role, plays a role in the regulation of Wnt signaling pathway during early development. This chain is Protein CUSTOS, found in Mus musculus (Mouse).